The sequence spans 189 residues: Glycerol-3-phosphate acyltransferase (189 aa).

Transmembrane regions (helical) follow at residues 1–21 (MFWS…AIVL), 50–70 (KLAI…VLLA), 81–101 (AWVG…RFQG), 111–131 (MLMA…VLTF), and 151–171 (LLAW…LMIV).

Belongs to the PlsY family. As to quaternary structure, probably interacts with PlsX.

Its subcellular location is the cell inner membrane. It catalyses the reaction an acyl phosphate + sn-glycerol 3-phosphate = a 1-acyl-sn-glycero-3-phosphate + phosphate. The protein operates within lipid metabolism; phospholipid metabolism. Its function is as follows. Catalyzes the transfer of an acyl group from acyl-phosphate (acyl-PO(4)) to glycerol-3-phosphate (G3P) to form lysophosphatidic acid (LPA). This enzyme utilizes acyl-phosphate as fatty acyl donor, but not acyl-CoA or acyl-ACP. The protein is Glycerol-3-phosphate acyltransferase of Pseudomonas entomophila (strain L48).